Reading from the N-terminus, the 155-residue chain is Small ribosomal subunit protein uS7c (155 aa).

The protein belongs to the universal ribosomal protein uS7 family. In terms of assembly, part of the 30S ribosomal subunit.

Its subcellular location is the plastid. It is found in the chloroplast. Its function is as follows. One of the primary rRNA binding proteins, it binds directly to 16S rRNA where it nucleates assembly of the head domain of the 30S subunit. The chain is Small ribosomal subunit protein uS7c (rps7) from Lilium superbum (Turk's cap lily).